We begin with the raw amino-acid sequence, 158 residues long: Non-secretory ribonuclease (158 aa).

An N-terminal signal peptide occupies residues 1-27 (MVPKLFTSQICVLLLFGLLSVEVSLQV). A C-linked (Man) tryptophan glycan is attached at tryptophan 34. The Proton acceptor role is filled by histidine 42. Cystine bridges form between cysteine 50–cysteine 110, cysteine 64–cysteine 121, cysteine 82–cysteine 136, and cysteine 89–cysteine 98. Tyrosine 60 carries the post-translational modification 3'-nitrotyrosine. Residue 65–69 (KNQNT) coordinates substrate. N-linked (GlcNAc...) asparagine glycosylation is found at asparagine 86, asparagine 92, and asparagine 111. Histidine 153 (proton donor) is an active-site residue.

This sequence belongs to the pancreatic ribonuclease family. In terms of assembly, interacts with and forms a tight 1:1 complex with RNH1. Dimerization of two such complexes may occur.

The protein resides in the lysosome. The protein localises to the cytoplasmic granule. It catalyses the reaction an [RNA] containing cytidine + H2O = an [RNA]-3'-cytidine-3'-phosphate + a 5'-hydroxy-ribonucleotide-3'-[RNA].. The enzyme catalyses an [RNA] containing uridine + H2O = an [RNA]-3'-uridine-3'-phosphate + a 5'-hydroxy-ribonucleotide-3'-[RNA].. In terms of biological role, this is a non-secretory ribonuclease. It is a pyrimidine specific nuclease with a slight preference for U. Cytotoxin and helminthotoxin. Possesses a wide variety of biological activities. This chain is Non-secretory ribonuclease (RNASE2), found in Saguinus oedipus (Cotton-top tamarin).